The primary structure comprises 310 residues: Porphobilinogen deaminase (310 aa).

C242 bears the S-(dipyrrolylmethanemethyl)cysteine mark.

It belongs to the HMBS family. Monomer. It depends on dipyrromethane as a cofactor.

The enzyme catalyses 4 porphobilinogen + H2O = hydroxymethylbilane + 4 NH4(+). It functions in the pathway porphyrin-containing compound metabolism; protoporphyrin-IX biosynthesis; coproporphyrinogen-III from 5-aminolevulinate: step 2/4. In terms of biological role, tetrapolymerization of the monopyrrole PBG into the hydroxymethylbilane pre-uroporphyrinogen in several discrete steps. This chain is Porphobilinogen deaminase, found in Shewanella sp. (strain ANA-3).